The sequence spans 2850 residues: Mucin-6 (2850 aa).

The N-terminal stretch at M1–A22 is a signal peptide. The 214-residue stretch at G43–A256 folds into the VWFD 1 domain. Intrachain disulfides connect C45-C218 and C67-C255. Residue N94 is glycosylated (N-linked (GlcNAc...) asparagine). Residues H160 to S183 are disordered. The N-linked (GlcNAc...) asparagine glycan is linked to N310. A TIL 1 domain is found at C344–C399. The VWFD 2 domain occupies G437–S621. Intrachain disulfides connect C439–C575 and C461–C620. Residues N528 and N701 are each glycosylated (N-linked (GlcNAc...) asparagine). A TIL 2 domain is found at C806–C869. The region spanning S908–G1080 is the VWFD 3 domain. Cystine bridges form between C910/C1044, C932/C1079, C941/C1041, and C959/C966. N-linked (GlcNAc...) asparagine glycans are attached at residues N1017 and N1221. Over residues E1263–G1281 the composition is skewed to low complexity. 16 disordered regions span residues E1263 to L1363, G1377 to V1400, V1466 to T1504, T1580 to H1600, I1626 to V1650, T1705 to T1813, Q1877 to H1942, I1968 to V1992, T2049 to T2119, Q2219 to S2254, I2276 to T2295, E2306 to D2338, T2370 to P2473, P2511 to S2621, P2634 to T2674, and S2692 to S2761. Residues E1294 to Y1312 are compositionally biased toward polar residues. Positions T1345–L1363 are enriched in low complexity. Polar residues-rich tracts occupy residues M1378 to R1399 and V1466 to H1484. A run of 8 repeats spans residues T1440 to E1555, G1556 to D1712, R1713 to D1885, R1886 to D2054, R2055 to D2227, R2228 to E2396, R2397 to T2563, and R2564 to K2671. Residues T1440–K2671 form an approximate repeats region. Residues T1485–T1504 show a composition bias toward low complexity. The span at I1626–A1639 shows a compositional bias: polar residues. Residues T1705–S1719 are compositionally biased toward low complexity. Residues A1720–H1757 are compositionally biased toward polar residues. A compositionally biased stretch (low complexity) spans T1758–T1777. Positions V1778–T1813 are enriched in polar residues. The span at S1893–H1942 shows a compositional bias: low complexity. Over residues I1968–A1981 the composition is skewed to polar residues. Over residues T2049–S2061 the composition is skewed to low complexity. Residues A2062–H2099 show a composition bias toward polar residues. Residues T2100–T2119 show a composition bias toward low complexity. Polar residues predominate over residues D2227–S2238. Low complexity predominate over residues T2282–T2295. Residues T2370–S2384 are compositionally biased toward low complexity. Residues A2385 to V2429 are compositionally biased toward polar residues. Residues H2436 to T2456 show a composition bias toward low complexity. Polar residues predominate over residues A2457 to S2466. Residues S2516 to T2533 show a composition bias toward low complexity. A compositionally biased stretch (polar residues) spans I2534–F2560. Positions P2561 to S2584 are enriched in low complexity. Over residues R2585–H2601 the composition is skewed to polar residues. A compositionally biased stretch (low complexity) spans T2639–T2674. Positions S2692–L2725 are enriched in polar residues. Over residues S2726–T2759 the composition is skewed to low complexity. 4 cysteine pairs are disulfide-bonded: C2760-C2807, C2774-C2821, C2783-C2841, and C2787-C2843. One can recognise a CTCK domain in the interval C2760–K2849.

Multimer; disulfide-linked. In terms of processing, O-glycosylated. Expressed in stomach, duodenum and small intestine.

It localises to the secreted. Its function is as follows. May provide a mechanism for modulation of the composition of the protective mucus layer related to acid secretion or the presence of bacteria and noxious agents in the lumen. Plays an important role in the cytoprotection of epithelial surfaces and are used as tumor markers in a variety of cancers. May play a role in epithelial organogenesis. This is Mucin-6 (Muc6) from Mus musculus (Mouse).